Consider the following 330-residue polypeptide: Ferredoxin--NADP reductase 2 (330 aa).

E37, Q45, Y50, V90, F124, D286, and T327 together coordinate FAD.

The protein belongs to the ferredoxin--NADP reductase type 2 family. Homodimer. The cofactor is FAD.

It carries out the reaction 2 reduced [2Fe-2S]-[ferredoxin] + NADP(+) + H(+) = 2 oxidized [2Fe-2S]-[ferredoxin] + NADPH. This Shouchella clausii (strain KSM-K16) (Alkalihalobacillus clausii) protein is Ferredoxin--NADP reductase 2.